Reading from the N-terminus, the 83-residue chain is uncharacterized protein (83 aa).

Positions 57 to 83 are disordered; it reads ESVEEEEEFEDYDEFEEEEEYYYDDEY.

This is an uncharacterized protein from Archaeoglobus fulgidus (strain ATCC 49558 / DSM 4304 / JCM 9628 / NBRC 100126 / VC-16).